A 236-amino-acid chain; its full sequence is Enolase-phosphatase E1 (236 aa).

The protein belongs to the HAD-like hydrolase superfamily. MasA/MtnC family. As to quaternary structure, monomer. The cofactor is Mg(2+).

It carries out the reaction 5-methylsulfanyl-2,3-dioxopentyl phosphate + H2O = 1,2-dihydroxy-5-(methylsulfanyl)pent-1-en-3-one + phosphate. It participates in amino-acid biosynthesis; L-methionine biosynthesis via salvage pathway; L-methionine from S-methyl-5-thio-alpha-D-ribose 1-phosphate: step 3/6. Its pathway is amino-acid biosynthesis; L-methionine biosynthesis via salvage pathway; L-methionine from S-methyl-5-thio-alpha-D-ribose 1-phosphate: step 4/6. In terms of biological role, bifunctional enzyme that catalyzes the enolization of 2,3-diketo-5-methylthiopentyl-1-phosphate (DK-MTP-1-P) into the intermediate 2-hydroxy-3-keto-5-methylthiopentenyl-1-phosphate (HK-MTPenyl-1-P), which is then dephosphorylated to form the acireductone 1,2-dihydroxy-3-keto-5-methylthiopentene (DHK-MTPene). The polypeptide is Enolase-phosphatase E1 (Frankia alni (strain DSM 45986 / CECT 9034 / ACN14a)).